Reading from the N-terminus, the 287-residue chain is Ribonuclease Z (287 aa).

Zn(2+) contacts are provided by His64, His66, Asp68, His69, His124, Asp191, and His250. The active-site Proton acceptor is Asp68.

This sequence belongs to the RNase Z family. In terms of assembly, homodimer. Zn(2+) is required as a cofactor.

It carries out the reaction Endonucleolytic cleavage of RNA, removing extra 3' nucleotides from tRNA precursor, generating 3' termini of tRNAs. A 3'-hydroxy group is left at the tRNA terminus and a 5'-phosphoryl group is left at the trailer molecule.. Zinc phosphodiesterase, which displays some tRNA 3'-processing endonuclease activity. Probably involved in tRNA maturation, by removing a 3'-trailer from precursor tRNA. The protein is Ribonuclease Z of Pyrobaculum arsenaticum (strain DSM 13514 / JCM 11321 / PZ6).